A 761-amino-acid chain; its full sequence is Phosphoribosylformylglycinamidine synthase subunit PurL (761 aa).

Positions 1–13 are enriched in polar residues; the sequence is MTSRVDTVDNAAS. The disordered stretch occupies residues 1 to 23; it reads MTSRVDTVDNAASTPDHPQPFAE. The active site involves His-57. 2 residues coordinate ATP: Tyr-60 and Lys-104. Glu-106 lines the Mg(2+) pocket. Residues 107-110 and Arg-129 each bind substrate; that span reads SHNH. The active-site Proton acceptor is His-108. Asp-130 is a binding site for Mg(2+). Gln-259 provides a ligand contact to substrate. Asp-287 lines the Mg(2+) pocket. Residue 331–333 coordinates substrate; the sequence is ESQ. 2 residues coordinate ATP: Asn-519 and Gly-556. Mg(2+) is bound at residue Asn-557. Substrate is bound at residue Ser-559.

This sequence belongs to the FGAMS family. Monomer. Part of the FGAM synthase complex composed of 1 PurL, 1 PurQ and 2 PurS subunits.

The protein localises to the cytoplasm. The catalysed reaction is N(2)-formyl-N(1)-(5-phospho-beta-D-ribosyl)glycinamide + L-glutamine + ATP + H2O = 2-formamido-N(1)-(5-O-phospho-beta-D-ribosyl)acetamidine + L-glutamate + ADP + phosphate + H(+). The protein operates within purine metabolism; IMP biosynthesis via de novo pathway; 5-amino-1-(5-phospho-D-ribosyl)imidazole from N(2)-formyl-N(1)-(5-phospho-D-ribosyl)glycinamide: step 1/2. Functionally, part of the phosphoribosylformylglycinamidine synthase complex involved in the purines biosynthetic pathway. Catalyzes the ATP-dependent conversion of formylglycinamide ribonucleotide (FGAR) and glutamine to yield formylglycinamidine ribonucleotide (FGAM) and glutamate. The FGAM synthase complex is composed of three subunits. PurQ produces an ammonia molecule by converting glutamine to glutamate. PurL transfers the ammonia molecule to FGAR to form FGAM in an ATP-dependent manner. PurS interacts with PurQ and PurL and is thought to assist in the transfer of the ammonia molecule from PurQ to PurL. The chain is Phosphoribosylformylglycinamidine synthase subunit PurL from Mycobacteroides abscessus (strain ATCC 19977 / DSM 44196 / CCUG 20993 / CIP 104536 / JCM 13569 / NCTC 13031 / TMC 1543 / L948) (Mycobacterium abscessus).